The chain runs to 451 residues: POU domain, class 3, transcription factor 1 (451 aa).

5 disordered regions span residues methionine 1–proline 21, alanine 69–alanine 114, alanine 134–glutamine 154, glycine 186–aspartate 253, and lysine 395–glutamine 451. Gly residues-rich tracts occupy residues glycine 11 to glycine 20, threonine 76 to alanine 85, and alanine 95 to phenylalanine 112. Over residues alanine 134–proline 145 the composition is skewed to low complexity. Residues alanine 190–glutamine 199 are compositionally biased toward basic and acidic residues. Positions alanine 220–proline 232 are enriched in low complexity. The POU-specific domain occupies glutamate 247–aspartate 321. A DNA-binding region (homeobox) is located at residues lysine 339–threonine 398. Residues proline 427–alanine 436 are compositionally biased toward pro residues.

The protein belongs to the POU transcription factor family. Class-3 subfamily. Neural tissues and testis.

It is found in the nucleus. Transcription factor that binds to the octamer motif (5'-ATTTGCAT-3'). Acts as a transcriptional activator when binding cooperatively with SOX4, SOX11, or SOX12 to gene promoters. Acts as a transcriptional repressor of myelin-specific genes. The sequence is that of POU domain, class 3, transcription factor 1 (Pou3f1) from Rattus norvegicus (Rat).